Reading from the N-terminus, the 937-residue chain is Lysosomal alpha-glucosidase (937 aa).

An N-terminal signal peptide occupies residues 1 to 23; the sequence is MMRWPPCSRPLLGVCTLLSLALL. Residues 24–60 constitute a propeptide that is removed on maturation; the sequence is GHILLHDLEVVPRELRGFSQDEIHQACQPGASSPECR. Positions 68–118 constitute a P-type domain; that stretch reads TQCDLPPNSRFDCAPDKGITPQQCEARGCCYMPAEWPPDAQMGQPWCFFPP. Intrachain disulfides connect C70–C97, C80–C96, and C91–C114. N-linked (GlcNAc...) asparagine glycosylation is found at N127, N220, N259, and N377. Substrate is bound at residue D391. N457 carries an N-linked (GlcNAc...) asparagine glycan. Residue D505 is the Nucleophile of the active site. Residue E508 is part of the active site. The cysteines at positions 520 and 545 are disulfide-linked. Substrate is bound by residues R587 and D603. C634 and C645 are oxidised to a cystine. N639 carries N-linked (GlcNAc...) asparagine glycosylation. H661 contacts substrate. N-linked (GlcNAc...) asparagine glycosylation is found at N867, N888, and N910.

Belongs to the glycosyl hydrolase 31 family.

The protein resides in the lysosome. It is found in the lysosome membrane. It carries out the reaction Hydrolysis of terminal, non-reducing (1-&gt;4)-linked alpha-D-glucose residues with release of alpha-D-glucose.. In terms of biological role, essential for the degradation of glycogen in lysosomes. Has highest activity on alpha-1,4-linked glycosidic linkages, but can also hydrolyze alpha-1,6-linked glucans. The protein is Lysosomal alpha-glucosidase (GAA) of Bos taurus (Bovine).